An 83-amino-acid polypeptide reads, in one-letter code: Mu-theraphotoxin-Hhn2j 4 (83 aa).

The signal sequence occupies residues 1–21 (MKASMFLALAGLVLLFVVGYA). Residues 22 to 48 (SESEEKEFPIELLSKIFAVDVFKGEGR) constitute a propeptide that is removed on maturation. 3 cysteine pairs are disulfide-bonded: Cys50-Cys65, Cys57-Cys70, and Cys64-Cys77. Leu81 is subject to Leucine amide.

It belongs to the neurotoxin 10 (Hwtx-1) family. 15 (Hntx-3) subfamily. Monomer. Expressed by the venom gland.

It localises to the secreted. In terms of biological role, lethal neurotoxin. Selectively blocks tetrodotoxin-sensitive voltage-gated sodium channels (Nav). Does not affect tetrodotoxin-resistant voltage-gated sodium channels or calcium channels. The chain is Mu-theraphotoxin-Hhn2j 4 from Cyriopagopus hainanus (Chinese bird spider).